Consider the following 356-residue polypeptide: NADH-quinone oxidoreductase subunit H (356 aa).

9 helical membrane-spanning segments follow: residues 17 to 37 (TGGILLVVIWVLLSLAFLLLA), 51 to 71 (PNVVGPFGLLQSFADFFKFVL), 83 to 103 (VVFILAPLISLILAFVGWAVV), 116 to 136 (VGILYLLAMSSLGVYGIIMGG), 162 to 182 (IGLIIITVILLAGSMNLSTIV), 202 to 222 (LVLLPVMVVAMGMFYISALAE), 261 to 281 (IVLMCAMISVLFFGGWNPGFP), 295 to 315 (LFLALVFYAKICFWFFMFAMA), and 334 to 354 (VFLPTSLVLVAAVAAWRVFGP).

It belongs to the complex I subunit 1 family. NDH-1 is composed of 14 different subunits. Subunits NuoA, H, J, K, L, M, N constitute the membrane sector of the complex.

It is found in the cell inner membrane. The catalysed reaction is a quinone + NADH + 5 H(+)(in) = a quinol + NAD(+) + 4 H(+)(out). In terms of biological role, NDH-1 shuttles electrons from NADH, via FMN and iron-sulfur (Fe-S) centers, to quinones in the respiratory chain. The immediate electron acceptor for the enzyme in this species is believed to be ubiquinone. Couples the redox reaction to proton translocation (for every two electrons transferred, four hydrogen ions are translocated across the cytoplasmic membrane), and thus conserves the redox energy in a proton gradient. This subunit may bind ubiquinone. This is NADH-quinone oxidoreductase subunit H from Caulobacter vibrioides (strain ATCC 19089 / CIP 103742 / CB 15) (Caulobacter crescentus).